The sequence spans 297 residues: Thiosulfate sulfurtransferase (297 aa).

Position 14 is an N6-acetyllysine; alternate (Lys-14). Lys-14 is subject to N6-succinyllysine; alternate. Residues 25–143 form the Rhodanese 1 domain; it reads VGPGLRVLDA…WLKEGHPVTS (119 aa). Residue Ser-35 is glycosylated (O-linked (GlcNAc) serine). Position 38 is a phosphoserine (Ser-38). An N6-acetyllysine; alternate modification is found at Lys-136. Residue Lys-136 is modified to N6-succinyllysine; alternate. A hinge region spans residues 144 to 159; that stretch reads EPSRPEPAIFKATLNR. Lys-163 carries the post-translational modification N6-acetyllysine. The Rhodanese 2 domain maps to 173-288; it reads ESKRFQLVDS…WFHRAPPETW (116 aa). An N6-acetyllysine; alternate modification is found at Lys-175. Lys-175 bears the N6-succinyllysine; alternate mark. Arg-187 contacts substrate. Lys-224 carries the post-translational modification N6-acetyllysine; alternate. Lys-224 is subject to N6-succinyllysine; alternate. At Lys-236 the chain carries N6-acetyllysine. An N6-acetyllysine; alternate modification is found at Lys-237. Lys-237 carries the post-translational modification N6-succinyllysine; alternate. Cys-248 acts as the Cysteine persulfide intermediate in catalysis. Lys-250 provides a ligand contact to substrate.

As to quaternary structure, monomer. Expressed in numerous tissues.

It localises to the mitochondrion matrix. The catalysed reaction is thiosulfate + hydrogen cyanide = thiocyanate + sulfite + 2 H(+). Functionally, together with MRPL18, acts as a mitochondrial import factor for the cytosolic 5S rRNA. Only the nascent unfolded cytoplasmic form is able to bind to the 5S rRNA. Formation of iron-sulfur complexes and cyanide detoxification. Binds molecular oxygen and sulfur. The protein is Thiosulfate sulfurtransferase (TST) of Bos taurus (Bovine).